The primary structure comprises 163 residues: Small ribosomal subunit protein uS3m (163 aa).

A mitochondrion-targeting transit peptide spans methionine 1–leucine 31.

It belongs to the universal ribosomal protein uS3 family. Component of the mitochondrial ribosome small subunit (28S) which comprises a 12S rRNA and about 30 distinct proteins.

Its subcellular location is the mitochondrion. This Danio rerio (Zebrafish) protein is Small ribosomal subunit protein uS3m (mrps24).